Reading from the N-terminus, the 204-residue chain is Peptide deformylase (204 aa).

2 residues coordinate Fe cation: cysteine 131 and histidine 174. The active site involves glutamate 175. Position 178 (histidine 178) interacts with Fe cation.

Belongs to the polypeptide deformylase family. Fe(2+) serves as cofactor.

The catalysed reaction is N-terminal N-formyl-L-methionyl-[peptide] + H2O = N-terminal L-methionyl-[peptide] + formate. In terms of biological role, removes the formyl group from the N-terminal Met of newly synthesized proteins. Requires at least a dipeptide for an efficient rate of reaction. N-terminal L-methionine is a prerequisite for activity but the enzyme has broad specificity at other positions. The chain is Peptide deformylase from Streptococcus gordonii (strain Challis / ATCC 35105 / BCRC 15272 / CH1 / DL1 / V288).